We begin with the raw amino-acid sequence, 180 residues long: Large ribosomal subunit protein uL5 (180 aa).

It belongs to the universal ribosomal protein uL5 family. As to quaternary structure, part of the 50S ribosomal subunit; part of the 5S rRNA/L5/L18/L25 subcomplex. Contacts the 5S rRNA and the P site tRNA. Forms a bridge to the 30S subunit in the 70S ribosome.

Its function is as follows. This is one of the proteins that bind and probably mediate the attachment of the 5S RNA into the large ribosomal subunit, where it forms part of the central protuberance. In the 70S ribosome it contacts protein S13 of the 30S subunit (bridge B1b), connecting the 2 subunits; this bridge is implicated in subunit movement. Contacts the P site tRNA; the 5S rRNA and some of its associated proteins might help stabilize positioning of ribosome-bound tRNAs. The sequence is that of Large ribosomal subunit protein uL5 from Ligilactobacillus salivarius (strain UCC118) (Lactobacillus salivarius).